The sequence spans 273 residues: NH(3)-dependent NAD(+) synthetase (273 aa).

Residue 47 to 54 coordinates ATP; sequence GISGGQDS. D53 contributes to the Mg(2+) binding site. Position 139 (R139) interacts with deamido-NAD(+). T159 is an ATP binding site. E164 serves as a coordination point for Mg(2+). K172 and D179 together coordinate deamido-NAD(+). ATP contacts are provided by K188 and T210. A deamido-NAD(+)-binding site is contributed by 259–260; that stretch reads HK.

It belongs to the NAD synthetase family. Homodimer.

The enzyme catalyses deamido-NAD(+) + NH4(+) + ATP = AMP + diphosphate + NAD(+) + H(+). Its pathway is cofactor biosynthesis; NAD(+) biosynthesis; NAD(+) from deamido-NAD(+) (ammonia route): step 1/1. Its function is as follows. Catalyzes the ATP-dependent amidation of deamido-NAD to form NAD. Uses ammonia as a nitrogen source. The chain is NH(3)-dependent NAD(+) synthetase from Staphylococcus aureus (strain bovine RF122 / ET3-1).